The primary structure comprises 421 residues: Core-capsid bridging protein (421 aa).

The protein belongs to the adenoviridae core-capsid bridging protein family. As to quaternary structure, monomer. Homodimer. Exists in equilibrium between monomers and dimers in solution. Interacts with the histone-like nucleoprotein; this interactions bridge the virus core to the capsid. Interacts with core protein X; this interactions bridge the virus core to the capsid. Interacts with the endosome lysis protein VI; this interactions bridge the virus core to the capsid. Interacts with the peripentonal hexons. Interacts with host NPM1; this interaction might play a role in virus assembly.

The protein resides in the virion. It is found in the host nucleus. Its subcellular location is the host nucleolus. Functionally, associates loosely with the viral DNA to form an outer shell around the nucleoprotein-DNA complex and links it with the capsid by binding the endosome lysis protein. Dissociates from the viral genome during entry. Might be involved in nuclear capsid assembly of the viral particles through its association with NPM1/nucleophosmin. This is Core-capsid bridging protein from Canine adenovirus serotype 1 (strain CLL) (CAdV-1).